We begin with the raw amino-acid sequence, 133 residues long: Small ribosomal subunit protein uS8 (133 aa).

This sequence belongs to the universal ribosomal protein uS8 family. As to quaternary structure, part of the 30S ribosomal subunit. Contacts proteins S5 and S12.

Its function is as follows. One of the primary rRNA binding proteins, it binds directly to 16S rRNA central domain where it helps coordinate assembly of the platform of the 30S subunit. This is Small ribosomal subunit protein uS8 from Synechococcus elongatus (strain ATCC 33912 / PCC 7942 / FACHB-805) (Anacystis nidulans R2).